A 174-amino-acid polypeptide reads, in one-letter code: Eukaryotic translation elongation factor 1 epsilon-1 (174 aa).

An N-acetylalanine modification is found at alanine 2. Positions 2 to 56 (AAAAELKLLEKSLGLRPGNKYSAQGERQIPVLQTNNGPSLTGLATIATHLVKQAS) are N-terminal. A GST C-terminal domain is found at 50 to 173 (HLVKQASKEH…FIKNRLYANS (124 aa)). The linker stretch occupies residues 57–63 (KEHLLGS). The tract at residues 64 to 152 (TAEEKALVQQ…SRWFCHIQHY (89 aa)) is C-terminal. Lysine 138 is subject to N6-acetyllysine. A coiled-coil region spans residues 153 to 169 (PDIRQHLSSVVFIKNRL).

Part of a multisubunit complex that groups tRNA ligases for Arg (RARS1), Asp (DARS1), Gln (QARS1), Ile (IARS1), Leu (LARS1), Lys (KARS1), Met (MARS1) the bifunctional ligase for Glu and Pro (EPRS1) and the auxiliary subunits AIMP1/p43, AIMP2/p38 and EEF1E1/p18. Can interact simultaneously with MARS1 and EPRS1. Forms a linear complex that contains MARS1, EEF1E1, EPRS1 and AIMP2 that is at the core of the multisubunit complex. Interacts with ATM and ATR. The interaction with ATM, which takes place independently of TP53, is induced by DNA damage that may occur during genotoxic stress or cell growth. The interaction with ATR is enhanced by UV irradiation.

It is found in the cytoplasm. The protein localises to the nucleus. In terms of biological role, positive modulator of ATM response to DNA damage. The chain is Eukaryotic translation elongation factor 1 epsilon-1 (EEF1E1) from Cricetulus griseus (Chinese hamster).